The following is a 226-amino-acid chain: X-linked lymphocyte-regulated protein 3A (226 aa).

Basic and acidic residues predominate over residues methionine 1–methionine 18. The disordered stretch occupies residues methionine 1–proline 72. The segment covering asparagine 21–proline 30 has biased composition (polar residues). Basic and acidic residues-rich tracts occupy residues glutamate 39 to isoleucine 48 and glutamine 56 to leucine 65. Positions glutamate 155–glutamine 210 form a coiled coil.

The protein belongs to the XLR/SYCP3 family. In terms of tissue distribution, expressed in lymphoid cells.

The polypeptide is X-linked lymphocyte-regulated protein 3A (Xlr3a) (Mus musculus (Mouse)).